We begin with the raw amino-acid sequence, 144 residues long: Large ribosomal subunit protein uL15 (144 aa).

The tract at residues 1–58 (MNLSNLRAPRKANEKKKRVGRGMGSGMGKTSARGHKGQRSRSGSRMMRGFEGGQMPLH) is disordered. Residues 8 to 20 (APRKANEKKKRVG) are compositionally biased toward basic residues. Positions 40-49 (SRSGSRMMRG) are enriched in low complexity.

This sequence belongs to the universal ribosomal protein uL15 family. Part of the 50S ribosomal subunit.

Binds to the 23S rRNA. The polypeptide is Large ribosomal subunit protein uL15 (Koribacter versatilis (strain Ellin345)).